A 200-amino-acid chain; its full sequence is LexA repressor (200 aa).

A DNA-binding region (H-T-H motif) is located at residues 29–48 (IRDIARAFRITPRGAIVHLN). Active-site for autocatalytic cleavage activity residues include serine 120 and lysine 158.

It belongs to the peptidase S24 family. In terms of assembly, homodimer.

The enzyme catalyses Hydrolysis of Ala-|-Gly bond in repressor LexA.. Its function is as follows. Represses a number of genes involved in the response to DNA damage (SOS response), including recA and lexA. In the presence of single-stranded DNA, RecA interacts with LexA causing an autocatalytic cleavage which disrupts the DNA-binding part of LexA, leading to derepression of the SOS regulon and eventually DNA repair. In Pseudothermotoga lettingae (strain ATCC BAA-301 / DSM 14385 / NBRC 107922 / TMO) (Thermotoga lettingae), this protein is LexA repressor.